The sequence spans 65 residues: Putative per-hexamer repeat protein 2 (65 aa).

The polypeptide is Putative per-hexamer repeat protein 2 (Phxr2) (Mus musculus (Mouse)).